The primary structure comprises 190 residues: MPRANEIKKGMVLNYNGKLLLVKDIDIQSPTARGAATLYKMRFSDVRTGLKVEERFKGDDIVDTVTLTRRYVDFSYVDGNEYVFMDKEDYTPYTFTKDQIEEELLFMPEGGMPDMQVLTWDGQLLALELPQTVDLEIVETAPGIKGASASARNKPATLSTGLVIQVPEYLSPGEKIRIHIEERRYMGRAD.

The protein belongs to the elongation factor P family.

The protein is Elongation factor P-like protein of Shigella dysenteriae serotype 1 (strain Sd197).